The following is a 353-amino-acid chain: Melatonin receptor type 1A (353 aa).

The Extracellular portion of the chain corresponds to 1–32 (MKGNVSELLNATQQAPGGGEGGRPRPSWLAST). N-linked (GlcNAc...) asparagine glycans are attached at residues Asn4 and Asn10. A helical transmembrane segment spans residues 33 to 53 (LAFILIFTIVVDILGNLLVIL). The Cytoplasmic portion of the chain corresponds to 54–66 (SVYRNKKLRNSGN). A helical transmembrane segment spans residues 67–87 (IFVVSLAVADLVVAVYPYPLV). The Extracellular portion of the chain corresponds to 88 to 105 (LTSILNNGWNLGYLHCQV). A disulfide bridge connects residues Cys103 and Cys180. A helical transmembrane segment spans residues 106-126 (SAFLMGLSVIGSIFNITGIAM). The Cytoplasmic segment spans residues 127–145 (NRYCYICHSLKYDKIYSNK). The helical transmembrane segment at 146-166 (NSLCYVFLIWMLTLIAIMPNL) threads the bilayer. The Extracellular portion of the chain corresponds to 167 to 190 (QTGTLQYDPRIYSCTFTQSVSSAY). A helical transmembrane segment spans residues 191-211 (TIAVVVFHFIVPMIIVIFCYL). The Cytoplasmic segment spans residues 212 to 243 (RIWVLVLQVRRRVKPDNKPKLKPQDFRNFVTM). A helical transmembrane segment spans residues 244 to 264 (FVVFVLFAICWAPLNLIGLIV). Topologically, residues 265–277 (ASDPATMVPRIPE) are extracellular. Residues 278-298 (WLFVASYYLAYFNSCLNAIIY) form a helical membrane-spanning segment. The Cytoplasmic portion of the chain corresponds to 299–353 (GLLNQNFRKEYKKIIVSLCTAKMFFVESSNEEADKIKCKPSPLIPNNNLIKVDSV).

This sequence belongs to the G-protein coupled receptor 1 family.

It localises to the cell membrane. High affinity receptor for melatonin. Likely to mediate the reproductive and circadian actions of melatonin. The activity of this receptor is mediated by pertussis toxin sensitive G proteins that inhibit adenylate cyclase activity. Possibly involved in sleep induction, by melatonin activation of the potassium channel KCNMA1/BK and the dissociation of G-beta and G-gamma subunits, thereby decreasing synaptic transmission. This Mus musculus (Mouse) protein is Melatonin receptor type 1A (Mtnr1a).